Reading from the N-terminus, the 443-residue chain is Trigger factor (443 aa).

Residues Lys-163–Pro-249 form the PPIase FKBP-type domain.

It belongs to the FKBP-type PPIase family. Tig subfamily.

It is found in the cytoplasm. It carries out the reaction [protein]-peptidylproline (omega=180) = [protein]-peptidylproline (omega=0). Involved in protein export. Acts as a chaperone by maintaining the newly synthesized protein in an open conformation. Functions as a peptidyl-prolyl cis-trans isomerase. This is Trigger factor from Desulfosudis oleivorans (strain DSM 6200 / JCM 39069 / Hxd3) (Desulfococcus oleovorans).